The chain runs to 342 residues: Alpha-tocopherol transfer protein-like (342 aa).

The interval 1-31 is disordered; that stretch reads MSEESDSLRTSPSVASLSENELPPPPEPPGY. Positions 8-19 are enriched in polar residues; it reads LRTSPSVASLSE. Residues 117 to 282 enclose the CRAL-TRIO domain; that stretch reads KPSALKDVLA…EYGGTAGELD (166 aa).

May act as a protein that binds a hydrophobic ligand. In Pongo abelii (Sumatran orangutan), this protein is Alpha-tocopherol transfer protein-like (TTPAL).